A 751-amino-acid chain; its full sequence is MQGGEPASVMKVSESEGKLEGLATAVTPNKNSGNSSCGGAISSSSSNSSRGGSAKGWQYSDHMESVNGYLMKYTNLVTGWQYRFFVLNNEAGLLEYFVNEQSRNQKPRGTLQLAGAVISPSDEDSHTFTVNAASGEQYKLRATDAKERQHWVSRLQICTQHHTEAIGKNNPPLKSRSFSLASSGNSPISQRRPSQNAMSFFNVGHSKLQSVNKRAHLHPDHLVEVREMMSHAEGQQRDLIRRIECLPASGLLSSLDQDLLMLKATSMATMNCLNDCFHILQLQHASHQKGALPSGTTIEWLEPKIPLSNHYKNGAEQPFATEPNKPMGAPEAQCVAESGVLAREPEDISADDEVEDTCDNKEDDLGAVEEQRSVILHLLSQLKLGMDLTRVVLPTFILEKRSLLEMYADFMSHPDLFIGITNGATPEDRMIRFVEYYLTSFHEGRKGAIAKKPYNPIIGETFHCSWRMPKSEVASGVSSSSSTPAITDHAPLPEEAPTQSVSDCYTVRFVAEQVSHHPPVSGFYAECAERKMCVNAHVWTKSKFLGMSIGVTMVGEGVLCLLEHGEEYTFSLPCAYARSILTVPWVELGGKVSVNCAKTGYSASITFHTKPFYGGKLHRVTAEVKYNLTNTVVCRVQGEWNSVLEFTYSNGETKFVDLAKLAVTKKRVRPLEKQDPFESRRLWKNVTDSLRESEIDKATEHKRSLEERQRTEERLRTETGTPWKTKYFIKEGDGWVYHKPLWKGIPSQPAE.

Position 1 is an N-acetylmethionine (Met-1). The segment at 1 to 57 (MQGGEPASVMKVSESEGKLEGLATAVTPNKNSGNSSCGGAISSSSSNSSRGGSAKGW) is disordered. Ser-15 bears the Phosphoserine mark. The residue at position 27 (Thr-27) is a Phosphothreonine. Residues 31-52 (NSGNSSCGGAISSSSSNSSRGG) are compositionally biased toward low complexity. The 98-residue stretch at 63 to 160 (MESVNGYLMK…WVSRLQICTQ (98 aa)) folds into the PH domain. Residues Ser-177, Ser-179, Ser-182, Ser-186, Ser-189, and Ser-194 each carry the phosphoserine modification. Disordered stretches follow at residues 475-497 (SGVS…EEAP) and 694-716 (EIDK…ERLR).

Belongs to the OSBP family. Heterodimer with OSBPL9.

It localises to the late endosome membrane. Its subcellular location is the golgi apparatus. The protein localises to the trans-Golgi network membrane. The catalysed reaction is a 1,2-diacyl-sn-glycero-3-phospho-(1D-myo-inositol 4-phosphate)(out) + a 1,2-diacyl-sn-glycero-3-phospho-L-serine(in) = a 1,2-diacyl-sn-glycero-3-phospho-(1D-myo-inositol 4-phosphate)(in) + a 1,2-diacyl-sn-glycero-3-phospho-L-serine(out). In terms of biological role, plays a role in regulating ADIPOQ and FABP4 levels in differentiating adipocytes and is also involved in regulation of adipocyte triglyceride storage. Weakly binds 25-hydroxycholesterol. Interacts with OSBPL9 to function as lipid transfer proteins. Together they form a heterodimer that localizes at the ER-trans-Golgi membrane contact sites, and exchanges phosphatidylserine (1,2-diacyl-sn-glycero-3-phospho-L-serine, PS) for phosphatidylinositol-4-phosphate (1,2-diacyl-sn-glycero-3-phospho-(1D-myo-inositol 4-phosphate), PI(4)P) between the two organelles, a step that is critical for sphingomyelin synthesis in the Golgi complex. The protein is Oxysterol-binding protein-related protein 11 (Osbpl11) of Mus musculus (Mouse).